The sequence spans 300 residues: UDP-N-acetylenolpyruvoylglucosamine reductase (300 aa).

The region spanning Lys30–Ala194 is the FAD-binding PCMH-type domain. Arg174 is a catalytic residue. Catalysis depends on Ser223, which acts as the Proton donor. The active site involves Glu293.

This sequence belongs to the MurB family. It depends on FAD as a cofactor.

The protein localises to the cytoplasm. It catalyses the reaction UDP-N-acetyl-alpha-D-muramate + NADP(+) = UDP-N-acetyl-3-O-(1-carboxyvinyl)-alpha-D-glucosamine + NADPH + H(+). Its pathway is cell wall biogenesis; peptidoglycan biosynthesis. In terms of biological role, cell wall formation. The chain is UDP-N-acetylenolpyruvoylglucosamine reductase from Geobacter metallireducens (strain ATCC 53774 / DSM 7210 / GS-15).